We begin with the raw amino-acid sequence, 320 residues long: Homeobox-leucine zipper protein HOX25 (320 aa).

The homeobox DNA-binding region spans 79–139; the sequence is AAARKRRLTA…NRRARWKTKQ (61 aa). A leucine-zipper region spans residues 138 to 182; sequence KQLELDFDRLRAAHDELLAGRTALAADNESLRSQVILLTEKLQAN. 2 disordered regions span residues 181–209 and 249–282; these read ANGK…KSFQ and DSPE…PSSS. The span at 265–278 shows a compositional bias: acidic residues; that stretch reads SEDDCGGAGSDDDY.

It belongs to the HD-ZIP homeobox family. Class I subfamily. Expressed in roots, leaf sheaths and blades and panicles.

Its subcellular location is the nucleus. In terms of biological role, probable transcription factor. The protein is Homeobox-leucine zipper protein HOX25 (HOX25) of Oryza sativa subsp. japonica (Rice).